A 251-amino-acid polypeptide reads, in one-letter code: Putative (5-formylfuran-3-yl)methyl phosphate synthase (251 aa).

Residue Lys-29 is the Schiff-base intermediate with substrate of the active site. The active-site Proton acceptor is Lys-87.

It belongs to the MfnB family.

It carries out the reaction 2 D-glyceraldehyde 3-phosphate = 4-(hydroxymethyl)-2-furancarboxaldehyde phosphate + phosphate + 2 H2O. Its function is as follows. Catalyzes the formation of 4-(hydroxymethyl)-2-furancarboxaldehyde phosphate (4-HFC-P) from two molecules of glyceraldehyde-3-P (GA-3-P). The protein is Putative (5-formylfuran-3-yl)methyl phosphate synthase of Kitasatospora aureofaciens (Streptomyces aureofaciens).